The following is a 259-amino-acid chain: Virulence plasmid ParA family protein pGP5-D (259 aa).

Position 9 to 16 (9 to 16) interacts with ATP; the sequence is FKGGTGKT.

The protein belongs to the ParA family.

The protein is Virulence plasmid ParA family protein pGP5-D of Chlamydia psittaci (Chlamydophila psittaci).